A 143-amino-acid chain; its full sequence is Nucleoside diphosphate kinase (143 aa).

Residues K11, F59, R87, T93, R104, and N114 each contribute to the ATP site. The Pros-phosphohistidine intermediate role is filled by H117.

This sequence belongs to the NDK family. As to quaternary structure, homotetramer. Mg(2+) serves as cofactor.

The protein localises to the cytoplasm. It catalyses the reaction a 2'-deoxyribonucleoside 5'-diphosphate + ATP = a 2'-deoxyribonucleoside 5'-triphosphate + ADP. It carries out the reaction a ribonucleoside 5'-diphosphate + ATP = a ribonucleoside 5'-triphosphate + ADP. Major role in the synthesis of nucleoside triphosphates other than ATP. The ATP gamma phosphate is transferred to the NDP beta phosphate via a ping-pong mechanism, using a phosphorylated active-site intermediate. The polypeptide is Nucleoside diphosphate kinase (Shewanella halifaxensis (strain HAW-EB4)).